The chain runs to 458 residues: UDP-N-acetylmuramoylalanine--D-glutamate ligase (458 aa).

118 to 124 is an ATP binding site; it reads GTNGKTT.

This sequence belongs to the MurCDEF family.

The protein resides in the cytoplasm. The catalysed reaction is UDP-N-acetyl-alpha-D-muramoyl-L-alanine + D-glutamate + ATP = UDP-N-acetyl-alpha-D-muramoyl-L-alanyl-D-glutamate + ADP + phosphate + H(+). It participates in cell wall biogenesis; peptidoglycan biosynthesis. Functionally, cell wall formation. Catalyzes the addition of glutamate to the nucleotide precursor UDP-N-acetylmuramoyl-L-alanine (UMA). The chain is UDP-N-acetylmuramoylalanine--D-glutamate ligase from Ligilactobacillus salivarius (strain UCC118) (Lactobacillus salivarius).